A 323-amino-acid chain; its full sequence is Ubiquinone biosynthesis protein COQ4, mitochondrial (323 aa).

The Zn(2+) site is built by His-209, Asp-210, His-213, and Glu-225.

It belongs to the COQ4 family. As to quaternary structure, component of a multi-subunit COQ enzyme complex, composed of at least COQ3, COQ4, COQ5, COQ6, COQ7 and COQ9. Requires Zn(2+) as cofactor.

The protein localises to the mitochondrion inner membrane. It carries out the reaction a 4-hydroxy-3-methoxy-5-(all-trans-polyprenyl)benzoate + H(+) = a 2-methoxy-6-(all-trans-polyprenyl)phenol + CO2. It participates in cofactor biosynthesis; ubiquinone biosynthesis. Its function is as follows. Lyase that catalyzes the C1-decarboxylation of 4-hydroxy-3-methoxy-5-(all-trans-polyprenyl)benzoic acid into 2-methoxy-6-(all-trans-polyprenyl)phenol during ubiquinone biosynthesis. In Debaryomyces hansenii (strain ATCC 36239 / CBS 767 / BCRC 21394 / JCM 1990 / NBRC 0083 / IGC 2968) (Yeast), this protein is Ubiquinone biosynthesis protein COQ4, mitochondrial.